Reading from the N-terminus, the 919-residue chain is Hyphally regulated cell wall protein 1 (919 aa).

Residues Met-1–Ala-20 form the signal peptide. A glycan (N-linked (GlcNAc...) asparagine) is linked at Asn-236. Residues Ser-332–Ser-483 form a disordered region. The segment covering Thr-344–Thr-392 has biased composition (low complexity). Positions Asn-393–Gly-414 are enriched in polar residues. Over residues Ser-415–Ser-475 the composition is skewed to low complexity. Residues Asn-449, Asn-488, Asn-580, Asn-585, Asn-607, Asn-619, Asn-631, Asn-639, Asn-647, and Asn-693 are each glycosylated (N-linked (GlcNAc...) asparagine). The span at Asp-567–Asn-590 shows a compositional bias: low complexity. The tract at residues Asp-567 to Glu-839 is disordered. Gly residues-rich tracts occupy residues Asn-607–Ser-665 and Glu-675–Ser-707. The segment covering Gln-708–Asn-724 has biased composition (low complexity). The segment covering Pro-725–Ser-783 has biased composition (gly residues). Residues Asn-729, Asn-741, and Asn-755 are each glycosylated (N-linked (GlcNAc...) asparagine). Positions Glu-784–Gly-798 are enriched in low complexity. Positions Ala-799–Ser-811 are enriched in basic and acidic residues. The segment covering Ala-823–Pro-833 has biased composition (polar residues). N-linked (GlcNAc...) asparagine glycosylation is found at Asn-879 and Asn-895. Asn-895 is lipidated: GPI-anchor amidated asparagine. Residues Gly-896–Met-919 constitute a propeptide, removed in mature form.

This sequence belongs to the HYR1/IFF family. Component of a multiprotein complex of 250 kDa composed of at least HYR1, MP65, and PRA1. Post-translationally, the GPI-anchor is attached to the protein in the endoplasmic reticulum and serves to target the protein to the cell surface. There, the glucosamine-inositol phospholipid moiety is cleaved off and the GPI-modified mannoprotein is covalently attached via its lipidless GPI glycan remnant to the 1,6-beta-glucan of the outer cell wall layer.

The protein localises to the secreted. It localises to the cell wall. The protein resides in the membrane. In terms of biological role, GPI-anchored hyphal cell wall protein required for hyphal growth and virulence. Involved in innate immune cell evasion through conferring resistance to neutrophil killing. Binds kininogen, the proteinaceous kinin precursor, and contributes to trigger the kinin-forming cascade on the cell surface. Production of kinins is often involved in the human host defense against microbial infections. This chain is Hyphally regulated cell wall protein 1 (HYR1), found in Candida albicans (strain SC5314 / ATCC MYA-2876) (Yeast).